A 26-amino-acid chain; its full sequence is Aralin B chain (26 aa).

As to quaternary structure, disulfide-linked dimer of A and B chains. In terms of processing, glycosylated. High-mannose type oligosaccharides.

Functionally, lectin specific for galactose (Gal) and its derivatives. Induces apoptosis. Has cytotoxic activity against several human cancer cell lines. Is less cytotoxic to normal human cells. This Aralia elata (Japanese angelica tree) protein is Aralin B chain.